We begin with the raw amino-acid sequence, 546 residues long: Thermosome subunit beta (546 aa).

Belongs to the TCP-1 chaperonin family. As to quaternary structure, forms a Heterooligomeric complex of two stacked eight-membered rings.

Its function is as follows. Molecular chaperone; binds unfolded polypeptides in vitro, and has a weak ATPase activity. The protein is Thermosome subunit beta (thsB) of Thermococcus kodakarensis (strain ATCC BAA-918 / JCM 12380 / KOD1) (Pyrococcus kodakaraensis (strain KOD1)).